A 360-amino-acid polypeptide reads, in one-letter code: MAALSLKGVRKSYDGAQYVLHGIDVDIADGEFVVLVGPSGCGKSTLLRMIAGLETVTEGEIAIGGRVVNTLEPKDRDIAMVFQNYALYPHMTVAQNMGYGLKIRGVERALIDARVQAAAQILELGPLLARRPRELSGGQRQRVAMGRAIVREPSVFLFDEPLSNLDAKLRVQMRLEIQRLHARLATTSVYVTHDQIEAMTLAQRVIVMNRGYAEQIGAPVDVYEKPATTFVASFIGSPAMNLLHGRLSEDGAAFDIADGPRLPVAGAAGAGREIAPGREWILGVRPEHMTPLPGAALATLAVDSCELLGADNLAHGRWGVHDVAVRLPHAMRPARGETLPVALPAQHLHFFDPATGKRAG.

In terms of domain architecture, ABC transporter spans 4 to 235 (LSLKGVRKSY…PATTFVASFI (232 aa)). 37–44 (GPSGCGKS) is a binding site for ATP.

This sequence belongs to the ABC transporter superfamily. sn-glycerol-3-phosphate importer (TC 3.A.1.1.3) family. In terms of assembly, the complex is composed of two ATP-binding proteins (UgpC), two transmembrane proteins (UgpA and UgpE) and a solute-binding protein (UgpB).

Its subcellular location is the cell inner membrane. It catalyses the reaction sn-glycerol 3-phosphate(out) + ATP + H2O = sn-glycerol 3-phosphate(in) + ADP + phosphate + H(+). Functionally, part of the ABC transporter complex UgpBAEC involved in sn-glycerol-3-phosphate (G3P) import. Responsible for energy coupling to the transport system. The polypeptide is sn-glycerol-3-phosphate import ATP-binding protein UgpC (Burkholderia thailandensis (strain ATCC 700388 / DSM 13276 / CCUG 48851 / CIP 106301 / E264)).